The sequence spans 286 residues: Master replication protein (286 aa).

The CRESS-DNA virus Rep endonuclease domain maps to 2–96 (ARQVICWCFT…LEGPWEYGEF (95 aa)). Positions 9–12 (CFTL) match the RCR-1 motif. 2 residues coordinate a divalent metal cation: Glu-33 and His-41. Residues 41-43 (HFQ) carry the RCR-2 motif. The Nuclear localization signal motif lies at 50-70 (KRTSLAGMKKLIPGAHFEKRR). Residue Tyr-79 is the For DNA cleavage activity of the active site. Residues 79–82 (YSMK) carry the RCR-3 motif. A divalent metal cation is bound at residue Asp-84. The Nuclear localization signal motif lies at 96–102 (FVPTIED). 186–188 (GKT) contributes to the ATP binding site.

Belongs to the nanoviridea/circoviridae replication-associated protein family. Homooligomer (Potential). Rep binds to repeated DNA motifs (iterons). Mg(2+) is required as a cofactor. It depends on Mn(2+) as a cofactor.

It is found in the host nucleus. It carries out the reaction ATP + H2O = ADP + phosphate + H(+). Essential for the replication of all genomic viral ssDNA (trans-replication). The closed circular ssDNA genome is first converted to a superhelical dsDNA. Rep binds a specific hairpin at the genome origin of replication. Introduces an endonucleolytic nick within the conserved sequence 5'-A[GT]TATTAC-3' in the intergenic region of the genome, thereby initiating the rolling circle replication (RCR). Following cleavage, binds covalently to the 5'-phosphate of DNA as a tyrosyl ester. The cleavage gives rise to a free 3'-OH that serves as a primer for the cellular DNA polymerase. The polymerase synthesizes the (+) strand DNA by rolling circle mechanism. After one round of replication, a Rep-catalyzed nucleotidyl transfer reaction releases a circular single-stranded virus genome, thereby terminating the replication. Displays origin-specific DNA cleavage, nucleotidyl transferase, ATPase and helicase activities. The protein is Master replication protein (DNA-R) of Cicer arietinum (Chickpea).